A 270-amino-acid polypeptide reads, in one-letter code: MSDIESLNGGDLFAEPSDFYKPPPEPHFATYTRDDVPESSTSQQKDIKLRLVGSSPLWGHLLWNAGIYTAKHMDSHPEEVQDKLVLELGAAGALPTIIAGLLGARKVVSTDYPDADLISNIQYNVDHNIYGGEELFKDEEKRSKQMANRKVVVEGYIWGNDYEPILKHLPQDQQKFDLIILSDLVFNHTEHAKLFKTTKDLLRENGKALVVFSPHRPWLLENDLAFFKDCEEFGLKSDLIELTHWKPMFDEDEETVEIRSSIYAYYLSHI.

Residues 1-45 (MSDIESLNGGDLFAEPSDFYKPPPEPHFATYTRDDVPESSTSQQK) form a disordered region. S-adenosyl-L-methionine contacts are provided by residues W63, 89-91 (GAA), D111, W158, and S182.

This sequence belongs to the class I-like SAM-binding methyltransferase superfamily. EFM7 family.

The protein localises to the cytoplasm. S-adenosyl-L-methionine-dependent protein methyltransferase that trimethylates the N-terminal glycine 'Gly-2' of elongation factor 1-alpha, before also catalyzing the mono- and dimethylation of 'Lys-3'. In Kluyveromyces lactis (strain ATCC 8585 / CBS 2359 / DSM 70799 / NBRC 1267 / NRRL Y-1140 / WM37) (Yeast), this protein is Protein N-terminal and lysine N-methyltransferase EFM7.